We begin with the raw amino-acid sequence, 819 residues long: Leucine--tRNA ligase (819 aa).

The 'HIGH' region motif lies at 40 to 51 (PYPSGAGLHVGH). A 'KMSKS' region motif is present at residues 600–604 (KMSKS). Residue Lys-603 participates in ATP binding.

It belongs to the class-I aminoacyl-tRNA synthetase family.

The protein resides in the cytoplasm. It carries out the reaction tRNA(Leu) + L-leucine + ATP = L-leucyl-tRNA(Leu) + AMP + diphosphate. This is Leucine--tRNA ligase from Chlamydia muridarum (strain MoPn / Nigg).